Here is a 639-residue protein sequence, read N- to C-terminus: Protein P1 (639 aa).

A signal peptide spans 1 to 20 (MNRFTAYAALFFIFSLCSTA). The next 3 helical transmembrane spans lie at 121–141 (AASV…WTLA), 144–164 (ITLF…LGCI), and 172–192 (ALSL…KIIW). The 193-residue stretch at 207 to 399 (VEGYKGFSVP…GITSPNYVFE (193 aa)) folds into the Peptidase S39 domain. Residues histidine 255, aspartate 286, and serine 354 each act as for protease activity in the active site. 2 disordered regions span residues 456–510 (TNAP…AAIS) and 542–639 (VSQK…NSKA). Residues 463–487 (TAQTNSAEKTAPSTSAEKTAPTNKP) show a composition bias toward polar residues. Residues 551–561 (KQNKRGRRGGK) are compositionally biased toward basic residues. A compositionally biased stretch (polar residues) spans 562-576 (NKQNNLPPTSTQSIS).

Belongs to the peptidase S39B family. Specific enzymatic cleavages in vivo yield mature proteins. The protease probably cleaves itself and releases the VPg protein. The VPg protein is probably further cleaved in its C-terminus.

The protein resides in the membrane. Its function is as follows. Precursor from which the VPg molecule is probably released at the onset of the RNA synthesis. Essential for virus replication. This Solanum tuberosum (Potato) protein is Protein P1.